We begin with the raw amino-acid sequence, 69 residues long: Large ribosomal subunit protein uL29 (69 aa).

It belongs to the universal ribosomal protein uL29 family.

In Parasynechococcus marenigrum (strain WH8102), this protein is Large ribosomal subunit protein uL29.